Consider the following 523-residue polypeptide: MIPDVSSDTLFWLKANPQALQGIYRGVERETLRINTQGHLAQTPHPKKLGAALTHKWITTDFAETLLEFITPVAQDIDHMLTLLRDIHRHVARHLCNEWMWPMSMPCFIDSQQQIKLAQYGPSNMGRMKTLYRKGLKNRYSAMMQIISGVHYNFSLPLTFWQVYAGVSDMNSNKDIISAGYLGLIRNYYRFGWIIPYIFGASPGVCQSFMKNRDTDLPFIKASSGFLYLPYATSLRMSDLGYANKSQSQLDITFNSLKEYVFRLKHAIRTPYADYQRIGLKKNGSYLQLNTNILQSENELYAPIRPKRITKNEESPLDALLRRGIEYIEVRALDINPFSPVGIDEEQVRFLDLFLIWCTLAPAPKMSTRELLYTRLNWTKVILEGRKPGLTLIVDGGSSKKPLATIGKELFSAMQALAETLDSHNGNIQYQQVCHKLRACIDQPELTLSARILKEMKKYGIRGLGLTLANQYFQILLEEPLEMFNELTFDKEQIRSWHRQLELEALDILSFDDFLAHINSHQQ.

It belongs to the glutamate--cysteine ligase type 1 family. Type 1 subfamily.

The catalysed reaction is L-cysteine + L-glutamate + ATP = gamma-L-glutamyl-L-cysteine + ADP + phosphate + H(+). It participates in sulfur metabolism; glutathione biosynthesis; glutathione from L-cysteine and L-glutamate: step 1/2. The sequence is that of Glutamate--cysteine ligase from Baumannia cicadellinicola subsp. Homalodisca coagulata.